We begin with the raw amino-acid sequence, 133 residues long: Ribosome-binding factor A (133 aa).

Belongs to the RbfA family. Monomer. Binds 30S ribosomal subunits, but not 50S ribosomal subunits or 70S ribosomes.

The protein localises to the cytoplasm. Functionally, one of several proteins that assist in the late maturation steps of the functional core of the 30S ribosomal subunit. Associates with free 30S ribosomal subunits (but not with 30S subunits that are part of 70S ribosomes or polysomes). Required for efficient processing of 16S rRNA. May interact with the 5'-terminal helix region of 16S rRNA. The protein is Ribosome-binding factor A of Acinetobacter baumannii (strain ACICU).